The primary structure comprises 186 residues: Tumor necrosis factor alpha-induced protein 8-like protein 1 (186 aa).

The protein belongs to the TNFAIP8 family. Interacts with FBXW5; TNFAIP8L1 competes with TSC2 to bind FBXW5 increasing TSC2 stability by preventing its ubiquitination. Detected in wide variety tissues, such as neurons in brain, hepatocytes, germ cells of female and male reproductive organs, muscular tissues and variety types of cells of the epithelial origin (at protein level).

It localises to the cytoplasm. In terms of biological role, acts as a negative regulator of mTOR activity. The chain is Tumor necrosis factor alpha-induced protein 8-like protein 1 (Tnfaip8l1) from Mus musculus (Mouse).